The chain runs to 195 residues: Thymidine kinase (195 aa).

Residues Gly15–Ser22, Glu23, Ser57–His58, and Asp88–Gln91 contribute to the ATP site. Glu89 (proton acceptor) is an active-site residue. Phe120 contacts substrate. Positions 145 and 148 each coordinate Zn(2+). Tyr179 is a binding site for substrate. Positions 183 and 186 each coordinate Zn(2+).

This sequence belongs to the thymidine kinase family.

The protein resides in the cytoplasm. It carries out the reaction thymidine + ATP = dTMP + ADP + H(+). The protein is Thymidine kinase of Clostridium acetobutylicum (strain ATCC 824 / DSM 792 / JCM 1419 / IAM 19013 / LMG 5710 / NBRC 13948 / NRRL B-527 / VKM B-1787 / 2291 / W).